A 581-amino-acid chain; its full sequence is Zinc finger protein 319 (581 aa).

Residues 1-22 (MSESWQQPPQTQPQQPQAPQPQ) show a composition bias toward low complexity. The tract at residues 1–39 (MSESWQQPPQTQPQQPQAPQPQHHAETPPALAEHTLPPG) is disordered. Residues 75 to 99 (PKCGVCGHDLAHLSSPHEHQCLAGH) form a C2H2-type 1 zinc finger. The segment at 103–125 (FQCTQCLKIFHQATDLLEHQCVQ) adopts a C2H2-type 2; degenerate zinc-finger fold. A Glycyl lysine isopeptide (Lys-Gly) (interchain with G-Cter in SUMO2) cross-link involves residue lysine 129. 4 consecutive C2H2-type zinc fingers follow at residues 131-153 (FVCGVCKMGFSLLTSLAQHHSSH), 201-223 (YSCPVCQKPFKHLSELSRHERIH), 229-251 (YKCTLCDKSFSQSSHLVHHKRTH), and 257-279 (YKCAVCEKTFKHRSHLVRHMYAH). Residue serine 280 is modified to Phosphoserine. A C2H2-type 7; degenerate zinc finger spans residues 286–308 (FRCNVCELHFKESSELLQHPCTP). 3 consecutive C2H2-type zinc fingers follow at residues 314–336 (FRCGECQKAFKRPSDLRQHERTH), 342–364 (FKCDLCPMGFKQQYALMRHRRTH), and 370–392 (FKCGLCEKGFGQPSHLLYHQHVH). The C2H2-type 11; degenerate zinc-finger motif lies at 398-420 (FKCPVCQKGFDQSAELLRHKCLP). The segment at 427–449 (FKCPVCNKAYKRASALQKHQLSH) adopts a C2H2-type 12 zinc-finger fold. The C2H2-type 13; degenerate zinc-finger motif lies at 457–479 (LRCTLCERRFFSSSEFVQHRCDP). 3 C2H2-type zinc fingers span residues 485–507 (LKCPDCEKRFKYASDLQRHRRVH), 513–535 (YKCPSCDKAFKQREHLNKHQGVH), and 541–563 (FKCVWCGERFLDVALLQEHSAQH).

The protein belongs to the krueppel C2H2-type zinc-finger protein family.

The protein localises to the nucleus. In terms of biological role, may be involved in transcriptional regulation. The chain is Zinc finger protein 319 (Znf319) from Mus musculus (Mouse).